Here is a 152-residue protein sequence, read N- to C-terminus: 3-hydroxyacyl-[acyl-carrier-protein] dehydratase FabZ (152 aa).

His58 is an active-site residue.

It belongs to the thioester dehydratase family. FabZ subfamily.

It localises to the cytoplasm. The enzyme catalyses a (3R)-hydroxyacyl-[ACP] = a (2E)-enoyl-[ACP] + H2O. Involved in unsaturated fatty acids biosynthesis. Catalyzes the dehydration of short chain beta-hydroxyacyl-ACPs and long chain saturated and unsaturated beta-hydroxyacyl-ACPs. In Prochlorococcus marinus subsp. pastoris (strain CCMP1986 / NIES-2087 / MED4), this protein is 3-hydroxyacyl-[acyl-carrier-protein] dehydratase FabZ.